A 126-amino-acid polypeptide reads, in one-letter code: Protein ApaG (126 aa).

An ApaG domain is found at 2–126; that stretch reads SDTQHQVNVR…FRLAVPGALH (125 aa).

The polypeptide is Protein ApaG (Pseudomonas aeruginosa (strain LESB58)).